Consider the following 123-residue polypeptide: WAP four-disulfide core domain protein 5 (123 aa).

The first 24 residues, 1–24 (MRIQSLLLLGALLAVGSQLPAVFG), serve as a signal peptide directing secretion. WAP domains are found at residues 27-73 (KGEK…CIPR) and 74-121 (VSVK…RDPA). Intrachain disulfides connect Cys34–Cys62, Cys41–Cys66, Cys49–Cys61, Cys55–Cys70, Cys81–Cys109, Cys88–Cys113, Cys96–Cys108, and Cys102–Cys117.

The protein localises to the secreted. Putative acid-stable proteinase inhibitor. The polypeptide is WAP four-disulfide core domain protein 5 (WFDC5) (Macaca mulatta (Rhesus macaque)).